Consider the following 231-residue polypeptide: Orotate phosphoribosyltransferase (231 aa).

Residues Lys-27, 79-80, Arg-106, Lys-107, Lys-110, His-112, and 133-141 each bind 5-phospho-alpha-D-ribose 1-diphosphate; these read YK and DDVMTAGTA. 2 residues coordinate orotate: Thr-137 and Arg-166.

It belongs to the purine/pyrimidine phosphoribosyltransferase family. PyrE subfamily. As to quaternary structure, homodimer. Mg(2+) serves as cofactor.

The enzyme catalyses orotidine 5'-phosphate + diphosphate = orotate + 5-phospho-alpha-D-ribose 1-diphosphate. It participates in pyrimidine metabolism; UMP biosynthesis via de novo pathway; UMP from orotate: step 1/2. Functionally, catalyzes the transfer of a ribosyl phosphate group from 5-phosphoribose 1-diphosphate to orotate, leading to the formation of orotidine monophosphate (OMP). This Bifidobacterium longum (strain DJO10A) protein is Orotate phosphoribosyltransferase.